We begin with the raw amino-acid sequence, 453 residues long: Tryptophan biosynthesis protein TrpCF (453 aa).

An indole-3-glycerol phosphate synthase region spans residues 1–257; sequence MMQTVLAKIV…AAVRRVLLGE (257 aa). Residues 258–453 are N-(5'-phosphoribosyl)anthranilate isomerase; that stretch reads NKVCGLTRGQ…ASVFQTLRAY (196 aa).

It in the N-terminal section; belongs to the TrpC family. The protein in the C-terminal section; belongs to the TrpF family. In terms of assembly, monomer.

It carries out the reaction N-(5-phospho-beta-D-ribosyl)anthranilate = 1-(2-carboxyphenylamino)-1-deoxy-D-ribulose 5-phosphate. The enzyme catalyses 1-(2-carboxyphenylamino)-1-deoxy-D-ribulose 5-phosphate + H(+) = (1S,2R)-1-C-(indol-3-yl)glycerol 3-phosphate + CO2 + H2O. It functions in the pathway amino-acid biosynthesis; L-tryptophan biosynthesis; L-tryptophan from chorismate: step 3/5. The protein operates within amino-acid biosynthesis; L-tryptophan biosynthesis; L-tryptophan from chorismate: step 4/5. Bifunctional enzyme that catalyzes two sequential steps of tryptophan biosynthetic pathway. The first reaction is catalyzed by the isomerase, coded by the TrpF domain; the second reaction is catalyzed by the synthase, coded by the TrpC domain. The sequence is that of Tryptophan biosynthesis protein TrpCF (trpC) from Escherichia coli (strain K12).